Here is a 207-residue protein sequence, read N- to C-terminus: Ras-related protein Rab-8B (207 aa).

Residues S17, G18, V19, G20, K21, T22, C23, T35, S39, and T40 each coordinate GTP. A Mg(2+)-binding site is contributed by T22. 2 short sequence motifs (switch) span residues 31 to 45 (DAFN…GIDF) and 63 to 80 (DTAG…YYRG). Positions 40 and 63 each coordinate Mg(2+). G66 is a binding site for GTP. A Phosphothreonine; by LRRK2 modification is found at T72. The GTP site is built by N121, K122, D124, A152, and K153. Phosphoserine occurs at positions 180 and 183. C204 carries the cysteine methyl ester modification. C204 carries S-geranylgeranyl cysteine lipidation. Positions 205 to 207 (SLL) are cleaved as a propeptide — removed in mature form.

The protein belongs to the small GTPase superfamily. Rab family. As to quaternary structure, associated with actin, delta-catenin and alpha and beta tubulins. Interacts with OTOF. Interacts with PEX5R. Interacts with RAB3IP. Interacts with VIM. Interacts with CDH1. Interacts with MICALL2. Interacts with GDI1, GDI2, CHML and CHM; phosphorylation at Thr-72 disrupts these interactions. Interacts with MICAL1. It depends on Mg(2+) as a cofactor. Phosphorylation of Thr-72 in the switch II region by LRRK2 prevents the association of RAB regulatory proteins, including CHM, CHML and RAB GDP dissociation inhibitors GDI1 and GDI2.

The protein resides in the cell membrane. It is found in the cytoplasmic vesicle. The protein localises to the phagosome membrane. It localises to the endosome membrane. It catalyses the reaction GTP + H2O = GDP + phosphate + H(+). With respect to regulation, regulated by guanine nucleotide exchange factors (GEFs) including RAB3IP/RABIN8 which promotes the exchange of bound GDP for free GTP. Regulated by GTPase activating proteins (GAPs) which increase the GTP hydrolysis activity. Inhibited by GDP dissociation inhibitors (GDIs). Its function is as follows. The small GTPases Rab are key regulators of intracellular membrane trafficking, from the formation of transport vesicles to their fusion with membranes. Rabs cycle between an inactive GDP-bound form and an active GTP-bound form that is able to recruit to membranes different sets of downstream effectors directly responsible for vesicle formation, movement, tethering and fusion. RAB8B may be involved in polarized vesicular trafficking and neurotransmitter release. May participate in cell junction dynamics in Sertoli cells. May also participate in the export of a subset of neosynthesized proteins through a Rab8-Rab10-Rab11-dependent endososomal export route. This chain is Ras-related protein Rab-8B, found in Mus musculus (Mouse).